We begin with the raw amino-acid sequence, 518 residues long: Integrator complex subunit 14 (518 aa).

One can recognise a VWFA domain in the interval 2–204; the sequence is PTVVVMDVSL…KNVQSMFGKL (203 aa). 3 residues coordinate Mg(2+): Ser-10, Ser-12, and Thr-86.

It belongs to the Integrator subunit 14 family. Component of the Integrator complex, composed of core subunits INTS1, INTS2, INTS3, INTS4, INTS5, INTS6, INTS7, INTS8, INTS9/RC74, INTS10, INTS11/CPSF3L, INTS12, INTS13, INTS14 and INTS15. The core complex associates with protein phosphatase 2A subunits PPP2CA and PPP2R1A, to form the Integrator-PP2A (INTAC) complex. INTS14 is part of the tail subcomplex, composed of INTS10, INTS13, INTS14 and INTS15.

The protein resides in the nucleus. In terms of biological role, component of the integrator complex, a multiprotein complex that terminates RNA polymerase II (Pol II) transcription in the promoter-proximal region of genes. The integrator complex provides a quality checkpoint during transcription elongation by driving premature transcription termination of transcripts that are unfavorably configured for transcriptional elongation: the complex terminates transcription by (1) catalyzing dephosphorylation of the C-terminal domain (CTD) of Pol II subunit POLR2A/RPB1 and SUPT5H/SPT5, (2) degrading the exiting nascent RNA transcript via endonuclease activity and (3) promoting the release of Pol II from bound DNA. The integrator complex is also involved in terminating the synthesis of non-coding Pol II transcripts, such as enhancer RNAs (eRNAs), small nuclear RNAs (snRNAs), telomerase RNAs and long non-coding RNAs (lncRNAs). Within the integrator complex, INTS14 is part of the integrator tail module that acts as a platform for the recruitment of transcription factors at promoters. This is Integrator complex subunit 14 from Xenopus tropicalis (Western clawed frog).